The primary structure comprises 199 residues: Recombination protein RecR (199 aa).

The segment at 58–73 (CRICYNITDTEVCNIC) adopts a C4-type zinc-finger fold. In terms of domain architecture, Toprim spans 81 to 176 (SLICVVSHPM…KVTRIAHGVP (96 aa)).

This sequence belongs to the RecR family.

Its function is as follows. May play a role in DNA repair. It seems to be involved in an RecBC-independent recombinational process of DNA repair. It may act with RecF and RecO. The protein is Recombination protein RecR of Thermoanaerobacter sp. (strain X514).